A 510-amino-acid polypeptide reads, in one-letter code: MIWHVQNDNFILNFTRIFMKAFHLPLFDGSFIFPECILIFGLILLLMIDSTSDQKDIPWLYFISSTSLVMSIMALLFRWREEPMISFSGNFQTNNFNEIFQVLILLCSTLCIPLSVEYIECTEMAITEFLLFVLTATLGGMFLCGANDLITIFVAPECFSFCSYLLSGYTKKDVRSNEATMKYLLMGGASSSILVHGFSWLYGLSGGEIELQEIVNGLINTQMYNSPGISIALIFITVGIGFKLSPAPSHQWTPDVYEGSPTPVVAFLSVTSKVAASALATRIFDIPFYLSSNEWHLLLEILALLSMILGNLIAITQTSMKRMLAYSSIGQIGYIIIGIIVGDSNDGYASMITYMLFYISMNLGTFACIILFGLRTGTDNIRDYAGLYTKDPFLALSLALCLLSLGGLPPLAGFFGKLYLFWCGWQAGLYFLVLIALVTSVLSIYYYLKIIKLLMNGRNQEITPHVGNYRRSSLRSKNSIEFSMIVCVIASTIPGISMNPIIAIAQDSLF.

The next 13 membrane-spanning stretches (helical) occupy residues 26–46 (LFDG…ILLL), 57–77 (IPWL…ALLF), 99–119 (IFQV…VEYI), 124–144 (MAIT…MFLC), 149–169 (LITI…LSGY), 184–204 (LLMG…LYGL), 227–247 (PGIS…LSPA), 295–315 (WHLL…LIAI), 323–343 (MLAY…IVGD), 354–374 (YMLF…LFGL), 395–415 (ALSL…AGFF), 418–438 (LYLF…IALV), and 484–504 (MIVC…IIAI).

Belongs to the complex I subunit 2 family. In terms of assembly, NDH is composed of at least 16 different subunits, 5 of which are encoded in the nucleus.

Its subcellular location is the plastid. The protein localises to the chloroplast thylakoid membrane. The catalysed reaction is a plastoquinone + NADH + (n+1) H(+)(in) = a plastoquinol + NAD(+) + n H(+)(out). It carries out the reaction a plastoquinone + NADPH + (n+1) H(+)(in) = a plastoquinol + NADP(+) + n H(+)(out). NDH shuttles electrons from NAD(P)H:plastoquinone, via FMN and iron-sulfur (Fe-S) centers, to quinones in the photosynthetic chain and possibly in a chloroplast respiratory chain. The immediate electron acceptor for the enzyme in this species is believed to be plastoquinone. Couples the redox reaction to proton translocation, and thus conserves the redox energy in a proton gradient. The polypeptide is NAD(P)H-quinone oxidoreductase subunit 2, chloroplastic (Trachelium caeruleum (Blue throatwort)).